Consider the following 507-residue polypeptide: ATP synthase subunit alpha, chloroplastic (507 aa).

Residue 170 to 177 (GDRQTGKT) participates in ATP binding.

This sequence belongs to the ATPase alpha/beta chains family. F-type ATPases have 2 components, CF(1) - the catalytic core - and CF(0) - the membrane proton channel. CF(1) has five subunits: alpha(3), beta(3), gamma(1), delta(1), epsilon(1). CF(0) has four main subunits: a, b, b' and c.

The protein resides in the plastid. It localises to the chloroplast thylakoid membrane. It carries out the reaction ATP + H2O + 4 H(+)(in) = ADP + phosphate + 5 H(+)(out). In terms of biological role, produces ATP from ADP in the presence of a proton gradient across the membrane. The alpha chain is a regulatory subunit. The sequence is that of ATP synthase subunit alpha, chloroplastic from Cycas taitungensis (Prince sago).